Consider the following 282-residue polypeptide: Protoheme IX farnesyltransferase (282 aa).

8 helical membrane passes run 40 to 60, 87 to 107, 108 to 128, 135 to 157, 162 to 184, 204 to 224, 228 to 248, and 261 to 281; these read LVLASLSMFLSIAGTTGFNMV, AVLASSAALAAGLAAGVAVNP, YVFVAGLLGFLIDIAVYTVLL, SVVFGGFAGGMPALGGWAAATGG, GVLLMLLVAVWSSLHIWTLSTYY, AGVVASLAAAVAVFLVAFLAF, LISAVGFAVAAVPLVLAVAVL, and AYRAFKLVNIFMGLFFVLLVL.

It belongs to the UbiA prenyltransferase family. Protoheme IX farnesyltransferase subfamily.

The protein resides in the cell membrane. The enzyme catalyses heme b + (2E,6E)-farnesyl diphosphate + H2O = Fe(II)-heme o + diphosphate. The protein operates within porphyrin-containing compound metabolism; heme O biosynthesis; heme O from protoheme: step 1/1. Its function is as follows. Converts heme B (protoheme IX) to heme O by substitution of the vinyl group on carbon 2 of heme B porphyrin ring with a hydroxyethyl farnesyl side group. This chain is Protoheme IX farnesyltransferase, found in Thermofilum pendens (strain DSM 2475 / Hrk 5).